The sequence spans 458 residues: UDP-N-acetylmuramate--L-alanine ligase (458 aa).

112 to 118 (GTHGKTT) lines the ATP pocket.

The protein belongs to the MurCDEF family.

It is found in the cytoplasm. It catalyses the reaction UDP-N-acetyl-alpha-D-muramate + L-alanine + ATP = UDP-N-acetyl-alpha-D-muramoyl-L-alanine + ADP + phosphate + H(+). Its pathway is cell wall biogenesis; peptidoglycan biosynthesis. Its function is as follows. Cell wall formation. The polypeptide is UDP-N-acetylmuramate--L-alanine ligase (Geotalea daltonii (strain DSM 22248 / JCM 15807 / FRC-32) (Geobacter daltonii)).